The primary structure comprises 706 residues: Polyribonucleotide nucleotidyltransferase (706 aa).

Mg(2+) is bound by residues D486 and D492. Positions 552–611 (PRIIAMKINPEKIRDVIGKGGAVIRALTEETGTQIDIQEDGSVKIACTSMEAGELAKKRI) constitute a KH domain. One can recognise an S1 motif domain in the interval 621–689 (GKVYEGPVIK…EKGRLRLSMK (69 aa)).

This sequence belongs to the polyribonucleotide nucleotidyltransferase family. Mg(2+) serves as cofactor.

The protein resides in the cytoplasm. It carries out the reaction RNA(n+1) + phosphate = RNA(n) + a ribonucleoside 5'-diphosphate. Involved in mRNA degradation. Catalyzes the phosphorolysis of single-stranded polyribonucleotides processively in the 3'- to 5'-direction. In Thiobacillus denitrificans (strain ATCC 25259 / T1), this protein is Polyribonucleotide nucleotidyltransferase.